We begin with the raw amino-acid sequence, 1044 residues long: Diacylglycerol lipase-alpha (1044 aa).

At 1 to 22 (MPGIVVFRRRWSVGSDDLVLPA) the chain is on the cytoplasmic side. The helical transmembrane segment at 23-43 (IFLFLLHTTWFVILSVVLFGL) threads the bilayer. Residues 44 to 60 (VYNPHEACSLNLVDHGR) lie on the Extracellular side of the membrane. A helical transmembrane segment spans residues 61-81 (GYLGILLSCMIAEMAIIWLSM). Residues 82–101 (RGGILYTEPRDSMQYVLYVR) lie on the Cytoplasmic side of the membrane. Residues 102–122 (LAILVIEFIYAIVGIVWLTQY) traverse the membrane as a helical segment. Over 123-136 (YTSCNDLTAKNVTL) the chain is Extracellular. The N-linked (GlcNAc...) asparagine glycan is linked to Asn133. The chain crosses the membrane as a helical span at residues 137 to 157 (GMVVCNWVVILSVCITVLCVF). The Cytoplasmic portion of the chain corresponds to 158–1044 (DPTGRTFVKL…KQDDLVISAR (887 aa)). Residues Ser472 and Asp524 each act as charge relay system in the active site. Residues Ser728, Ser730, Ser733, Ser744, Ser784, Ser786, Ser808, Ser810, Ser835, Ser849, and Ser954 each carry the phosphoserine modification. The interval 848–897 (LSKHSQDTQPLEAALGSGGVTPERPPSATIEEEEAAGGSEGGGVAPRGEL) is disordered. The segment at 1013 to 1044 (QECLATDKIRTSTPTGHGASPTKQDDLVISAR) is disordered. Thr1025 bears the Phosphothreonine mark.

It belongs to the AB hydrolase superfamily. Lipase family. Interacts (via C-terminal) with CAMK2A; leading to the phosphorylation and inhibition of DAGLA enzymatic activity. Interacts (via PPXXF motif) with HOMER1 and HOMER2; this interaction is required for DAGLA membrane localization. Requires Ca(2+) as cofactor. Post-translationally, phosphorylated at Ser-784 and Ser-810 by CAMK2A; phosphorylation by CAMK2A inhibits diacylglycerol lipase activity. In terms of tissue distribution, highly expressed by principal cells in the hippocampus. In embryonic brains, it is present in axonal tracts, while in adults it localizes to dendritic fields, correlating with the developmental change in requirement for 2-AG synthesis from the pre- to the postsynaptic compartment. Concentrated in heads of dendritic spines throughout the hippocampal formation. Highly compartmentalized into a wide perisynaptic annulus around the postsynaptic density of axospinous contacts but not intrasynaptically (at protein level).

It is found in the cell membrane. The protein localises to the cell projection. The protein resides in the dendritic spine membrane. Its subcellular location is the postsynaptic density membrane. It localises to the early endosome membrane. It catalyses the reaction a 1,2-diacyl-sn-glycerol + H2O = a 2-acylglycerol + a fatty acid + H(+). The enzyme catalyses 1-octadecanoyl-2-(5Z,8Z,11Z,14Z-eicosatetraenoyl)-sn-glycerol + H2O = 2-(5Z,8Z,11Z,14Z-eicosatetraenoyl)-glycerol + octadecanoate + H(+). The catalysed reaction is 1,2-di-(9Z-octadecenoyl)-sn-glycerol + H2O = 2-(9Z-octadecenoyl)-glycerol + (9Z)-octadecenoate + H(+). It carries out the reaction 1-(9Z-octadecenoyl)-2-(5Z,8Z,11Z,14Z-eicosatetraenoyl)-sn-glycerol + H2O = 2-(5Z,8Z,11Z,14Z-eicosatetraenoyl)-glycerol + (9Z)-octadecenoate + H(+). It catalyses the reaction 1-(9Z-octadecenoyl)-2-octadecanoyl-sn-glycerol + H2O = 2-octadecanoylglycerol + (9Z)-octadecenoate + H(+). The enzyme catalyses 1-(9Z-octadecenoyl)-2-(9Z,12Z-octadecadienoyl)-sn-glycerol + H2O = 2-(9Z,12Z-octadecadienoyl)-glycerol + (9Z)-octadecenoate + H(+). The catalysed reaction is 1-(9Z-octadecenoyl)-2-O-(5Z,8Z,11Z,14Z-eicosatetraenyl)-sn-glycerol + H2O = 2-O-(5Z,8Z,11Z,14Z)-eicosatetraenylglycerol + (9Z)-octadecenoate + H(+). Its activity is regulated as follows. Inhibited by 1,2,3-triazole urea covalent inhibitor KT172, DH376 and DO34. Inhibited by p-hydroxy-mercuri-benzoate and HgCl(2), but not to PMSF. Also inhibited by RHC80267. Diacylglycerol lipase activity is inhibited by the phosphorylation of Ser-784 and Ser-810 by CAMK2A. Serine hydrolase that hydrolyzes arachidonic acid-esterified diacylglycerols (DAGs) to produce the principal endocannabinoid (eCB), 2-arachidonoylglycerol (2-AG). Preferentially hydrolyzes sn-1 fatty acids from diacylglycerols (DAG) that contain arachidonic acid (AA) esterified at the sn-2 position to biosynthesize 2-AG. Has negligible activity against other lipids including monoacylglycerols and phospholipids. Plays a key role in regulating 2-AG signaling in the central nervous system (CNS). Controls the activity of 2-AG as a retrograde messenger at neuronal synapses. Supports axonal growth during development and adult neurogenesis. Plays a role for eCB signaling in the physiological regulation of anxiety and depressive behaviors. Also regulates neuroinflammatory responses in the brain, in particular, LPS-induced microglial activation. The protein is Diacylglycerol lipase-alpha (Dagla) of Mus musculus (Mouse).